The following is a 124-amino-acid chain: Quinol oxidase subunit 4 (124 aa).

3 consecutive transmembrane segments (helical) span residues 16–36 (IVGFALSIVLTLLALWVAVYT), 44–64 (LWIIFGFAFIQAALQLLMFMH), and 78–98 (TLFGFFGAIVIVLGSIWIFAA).

This sequence belongs to the cytochrome c oxidase bacterial subunit 4 family.

It is found in the cell membrane. The enzyme catalyses 2 a quinol + O2 = 2 a quinone + 2 H2O. In terms of biological role, catalyzes quinol oxidation with the concomitant reduction of oxygen to water. Major component for energy conversion during vegetative growth. In Bacillus spizizenii (strain ATCC 23059 / NRRL B-14472 / W23) (Bacillus subtilis subsp. spizizenii), this protein is Quinol oxidase subunit 4 (qoxD).